The primary structure comprises 317 residues: tRNA-cytidine(32) 2-sulfurtransferase (317 aa).

The segment at 1–29 (MNTANNTLPTAADWAGEDGAPDAADTRKI) is disordered. Residues 65 to 70 (SGGKDS) carry the PP-loop motif motif. Positions 140, 143, and 231 each coordinate [4Fe-4S] cluster.

This sequence belongs to the TtcA family. In terms of assembly, homodimer. Mg(2+) serves as cofactor. Requires [4Fe-4S] cluster as cofactor.

It is found in the cytoplasm. It catalyses the reaction cytidine(32) in tRNA + S-sulfanyl-L-cysteinyl-[cysteine desulfurase] + AH2 + ATP = 2-thiocytidine(32) in tRNA + L-cysteinyl-[cysteine desulfurase] + A + AMP + diphosphate + H(+). It functions in the pathway tRNA modification. Its function is as follows. Catalyzes the ATP-dependent 2-thiolation of cytidine in position 32 of tRNA, to form 2-thiocytidine (s(2)C32). The sulfur atoms are provided by the cysteine/cysteine desulfurase (IscS) system. This chain is tRNA-cytidine(32) 2-sulfurtransferase, found in Acidovorax ebreus (strain TPSY) (Diaphorobacter sp. (strain TPSY)).